The following is a 130-amino-acid chain: Small ribosomal subunit protein uS8 (130 aa).

Belongs to the universal ribosomal protein uS8 family.

The sequence is that of Small ribosomal subunit protein uS8 (RPS22) from Kluyveromyces marxianus (Yeast).